We begin with the raw amino-acid sequence, 177 residues long: Protein BROTHER of FT and TFL 1 (177 aa).

The protein belongs to the phosphatidylethanolamine-binding protein family.

It localises to the cytoplasm. In terms of biological role, may form complexes with phosphorylated ligands by interfering with kinases and their effectors. This is Protein BROTHER of FT and TFL 1 (BFT) from Arabidopsis thaliana (Mouse-ear cress).